Here is a 289-residue protein sequence, read N- to C-terminus: Toxin tox21A (289 aa).

Positions 1-14 (MNLYFLFFISTILA) are cleaved as a signal peptide. Positions 15-27 (AKPFNSFNKTSLI) are excised as a propeptide. The interval 270 to 289 (DKDITVHENAGDPKSDSRRC) is disordered.

Post-translationally, contains several disulfide bonds. In terms of tissue distribution, posterior glands which appear to be connected with the stylet through a series of ducts.

It localises to the secreted. In terms of biological role, has contracting-paralyzing activity in insect larvae. This chain is Toxin tox21A, found in Pyemotes tritici (Straw itch mite).